A 166-amino-acid chain; its full sequence is KH homology domain-containing protein 1C (166 aa).

Positions 19–78 constitute a KH; atypical domain; it reads PLVFDMEEDKEDYIFGPHDEYLHTLEVHSNTLIQLERWFTPTGQTRVTVVGPLKARLWVM.

Belongs to the KHDC1 family.

This chain is KH homology domain-containing protein 1C (Khdc1c), found in Mus musculus (Mouse).